The sequence spans 257 residues: Early E1A protein (257 aa).

2 disordered regions span residues 26 to 46 (NATMGDDHPEPPTPFGTPSLH) and 75 to 103 (LAAEEASSPSSDSDSSLHTPRHDRGEKEI). The segment at 43 to 51 (PSLHDLYDL) is interaction with RB1 in competition with E2F1. Residues 75-91 (LAAEEASSPSSDSDSSL) are compositionally biased toward low complexity. Residues 79-144 (EASSPSSDSD…ASHGVQAVSE (66 aa)) are interaction with UBE2I. Basic and acidic residues predominate over residues 94-103 (PRHDRGEKEI). Residues 104 to 108 (PGLKW) carry the PXLXP motif, interaction with host ZMYND11 motif. The LXCXE motif, interaction with host RB1 and TMEM173/STING motif lies at 113-117 (LRCYE). The segment at 158 to 178 (CKSCEFHRINTGDKAVLCALC) is a zinc-finger region. The tract at residues 191–221 (VSDADDETPTTESTLSPPEIGTSPSDNIVRP) is disordered. Over residues 200–209 (TTESTLSPPE) the composition is skewed to low complexity. Residues 246 to 250 (PLDLC) carry the PXDLS motif, CTBP-binding motif. The Nuclear localization signal motif lies at 252-257 (RKRPRH).

It belongs to the adenoviridae E1A protein family. In terms of assembly, interacts with host UBE2I; this interaction interferes with polySUMOylation. Interacts with host RB1; this interaction induces the aberrant dissociation of RB1-E2F1 complex thereby disrupting the activity of RB1 and activating E2F1-regulated genes. Interacts with host ATF7; the interaction enhances ATF7-mediated viral transactivation activity which requires the zinc binding domains of both proteins. Isoform early E1A 32 kDa protein and isoform early E1A 26 kDa protein interact (via N-terminus) with CUL1 and E3 ubiquitin ligase RBX1; these interactions inhibit RBX1-CUL1-dependent elongation reaction of ubiquitin chains and attenuate ubiquitination of SCF(FBXW7) target proteins. Interacts (via PXLXP motif) with host ZMYND11/BS69 (via MYND-type zinc finger); this interaction inhibits E1A mediated transactivation. Interacts with host EP300; this interaction stimulates the acetylation of RB1 by recruiting EP300 and RB1 into a multimeric-protein complex. Interacts with host CTBP1 and CTBP2; this interaction seems to potentiate viral replication. Interacts with host DCAF7. Interacts with host DYRK1A. Interacts with host KPNA4; this interaction allows E1A import into the host nucleus. Interacts with host EP400; this interaction stabilizes MYC. Interacts with host TBP protein; this interaction probably disrupts the TBP-TATA complex. Interacts (via LXCXE motif) with host TMEM173/STING; this interaction impairs the ability of TMEM173/STING to sense cytosolic DNA and promote the production of type I interferon (IFN-alpha and IFN-beta). Interacts (via C-terminus) with host ZBED1/hDREF (via C-terminus); the interaction is direct.

The protein resides in the host nucleus. Plays a role in viral genome replication by driving entry of quiescent cells into the cell cycle. Stimulation of progression from G1 to S phase allows the virus to efficiently use the cellular DNA replicating machinery to achieve viral genome replication. E1A protein has both transforming and trans-activating activities. Induces the disassembly of the E2F1 transcription factor from RB1 by direct competition for the same binding site on RB1, with subsequent transcriptional activation of E2F1-regulated S-phase genes and of the E2 region of the adenoviral genome. Release of E2F1 leads to the ARF-mediated inhibition of MDM2 and causes TP53/p53 to accumulate because it is not targeted for degradation by MDM2-mediated ubiquitination anymore. This increase in TP53, in turn, would arrest the cell proliferation and direct its death but this effect is counteracted by the viral protein E1B-55K. Inactivation of the ability of RB1 to arrest the cell cycle is critical for cellular transformation, uncontrolled cellular growth and proliferation induced by viral infection. Interaction with RBX1 and CUL1 inhibits ubiquitination of the proteins targeted by SCF(FBXW7) ubiquitin ligase complex, and may be linked to unregulated host cell proliferation. The tumorigenesis-restraining activity of E1A may be related to the disruption of the host CtBP-CtIP complex through the CtBP binding motif. Interaction with host TMEM173/STING impairs the ability of TMEM173/STING to sense cytosolic DNA and promote the production of type I interferon (IFN-alpha and IFN-beta). Promotes the sumoylation of host ZBED1/hDREF with SUMO1. This Human adenovirus E serotype 4 (HAdV-4) protein is Early E1A protein.